The chain runs to 302 residues: Sulfate adenylyltransferase subunit 2 (302 aa).

Belongs to the PAPS reductase family. CysD subfamily. Heterodimer composed of CysD, the smaller subunit, and CysN.

The enzyme catalyses sulfate + ATP + H(+) = adenosine 5'-phosphosulfate + diphosphate. It participates in sulfur metabolism; hydrogen sulfide biosynthesis; sulfite from sulfate: step 1/3. With CysN forms the ATP sulfurylase (ATPS) that catalyzes the adenylation of sulfate producing adenosine 5'-phosphosulfate (APS) and diphosphate, the first enzymatic step in sulfur assimilation pathway. APS synthesis involves the formation of a high-energy phosphoric-sulfuric acid anhydride bond driven by GTP hydrolysis by CysN coupled to ATP hydrolysis by CysD. The polypeptide is Sulfate adenylyltransferase subunit 2 (Buchnera aphidicola subsp. Acyrthosiphon pisum (strain 5A)).